The following is a 332-amino-acid chain: Ribosomal RNA small subunit methyltransferase H (332 aa).

Residues 39–41 (GGY), Asp-56, Phe-83, Asp-100, and Gln-107 contribute to the S-adenosyl-L-methionine site.

The protein belongs to the methyltransferase superfamily. RsmH family.

Its subcellular location is the cytoplasm. It catalyses the reaction cytidine(1402) in 16S rRNA + S-adenosyl-L-methionine = N(4)-methylcytidine(1402) in 16S rRNA + S-adenosyl-L-homocysteine + H(+). Specifically methylates the N4 position of cytidine in position 1402 (C1402) of 16S rRNA. The protein is Ribosomal RNA small subunit methyltransferase H of Bartonella quintana (strain Toulouse) (Rochalimaea quintana).